A 314-amino-acid chain; its full sequence is Basic leucine zipper 63 (314 aa).

A Phosphoserine; by KIN10 modification is found at Ser-29. The disordered stretch occupies residues Lys-94–Ser-177. Residues Gln-96–Glu-133 are compositionally biased toward polar residues. In terms of domain architecture, bZIP spans Asn-151 to Leu-214. Residues Lys-153–Lys-172 are basic motif. The Nuclear localization signal 1 signature appears at Val-155–Arg-162. A leucine-zipper region spans residues Leu-179–Leu-193. The interval Ser-253–Ile-274 is disordered. A phosphoserine; by KIN10 mark is found at Ser-294 and Ser-300. The Nuclear localization signal 2 signature appears at Met-295 to Glu-302.

It belongs to the bZIP family. Homodimer. Forms a heterodimer with LSD1, BZIP1, BZIP2, BZIP9, BZIP10, BZIP11, BZIP25, BZIP44 and BZIP53. Interacts with KIN10 and SNF4. Component of a ternary complex composed of BZIP2-BZIP63 heterodimer and KIN10. In terms of processing, phosphorylated. The phosphorylation at Ser-29, Ser-294 and Ser-300 by KIN10 strongly enhances its ability to form homo- as well as heterodimers and are then essential for its transcriptional activity. As to expression, expressed in roots, shoots, young leaves, pollen, and flowers.

The protein localises to the nucleus. Up-regulated by KIN10 under a phosphorylation-dependent manner. Transcription factor involved in controlling responses to starvation. BZIP2-BZIP63-KIN10 complex binds to the ETFQO promoter to up-regulate its transcription. The protein is Basic leucine zipper 63 (BZIP63) of Arabidopsis thaliana (Mouse-ear cress).